A 215-amino-acid chain; its full sequence is ATP phosphoribosyltransferase (215 aa).

Belongs to the ATP phosphoribosyltransferase family. Short subfamily. In terms of assembly, heteromultimer composed of HisG and HisZ subunits.

The protein resides in the cytoplasm. The catalysed reaction is 1-(5-phospho-beta-D-ribosyl)-ATP + diphosphate = 5-phospho-alpha-D-ribose 1-diphosphate + ATP. It participates in amino-acid biosynthesis; L-histidine biosynthesis; L-histidine from 5-phospho-alpha-D-ribose 1-diphosphate: step 1/9. Functionally, catalyzes the condensation of ATP and 5-phosphoribose 1-diphosphate to form N'-(5'-phosphoribosyl)-ATP (PR-ATP). Has a crucial role in the pathway because the rate of histidine biosynthesis seems to be controlled primarily by regulation of HisG enzymatic activity. The protein is ATP phosphoribosyltransferase of Prochlorococcus marinus subsp. pastoris (strain CCMP1986 / NIES-2087 / MED4).